The sequence spans 357 residues: uncharacterized protein (357 aa).

Ser72 is modified (phosphoserine). Disordered regions lie at residues 79–98, 264–290, and 323–357; these read GVNEDHYTGGGSSNNNRPSR, QKQLQGNSKPVKNLPNSNAKQRAGASV, and ISDEDEEDEEEDSFQQRSANNRILPAEILSNEPLK. The span at 324 to 335 shows a compositional bias: acidic residues; it reads SDEDEEDEEEDS.

This is an uncharacterized protein from Saccharomyces cerevisiae (strain ATCC 204508 / S288c) (Baker's yeast).